The chain runs to 135 residues: Ribosome-binding factor A (135 aa).

The protein belongs to the RbfA family. As to quaternary structure, monomer. Binds 30S ribosomal subunits, but not 50S ribosomal subunits or 70S ribosomes.

It is found in the cytoplasm. Functionally, one of several proteins that assist in the late maturation steps of the functional core of the 30S ribosomal subunit. Associates with free 30S ribosomal subunits (but not with 30S subunits that are part of 70S ribosomes or polysomes). Required for efficient processing of 16S rRNA. May interact with the 5'-terminal helix region of 16S rRNA. This is Ribosome-binding factor A from Aliivibrio salmonicida (strain LFI1238) (Vibrio salmonicida (strain LFI1238)).